Reading from the N-terminus, the 59-residue chain is MAKLKITLVRSISKLNESQTATVRALGLRKRGSCVEQQDTPQIRGMIKKVEHVLSVEEI.

It belongs to the universal ribosomal protein uL30 family. In terms of assembly, part of the 50S ribosomal subunit.

This is Large ribosomal subunit protein uL30 from Acetivibrio thermocellus (strain ATCC 27405 / DSM 1237 / JCM 9322 / NBRC 103400 / NCIMB 10682 / NRRL B-4536 / VPI 7372) (Clostridium thermocellum).